A 214-amino-acid polypeptide reads, in one-letter code: ATP-dependent Clp protease proteolytic subunit (214 aa).

The active-site Nucleophile is S113. H138 is a catalytic residue.

This sequence belongs to the peptidase S14 family. In terms of assembly, fourteen ClpP subunits assemble into 2 heptameric rings which stack back to back to give a disk-like structure with a central cavity, resembling the structure of eukaryotic proteasomes.

It localises to the cytoplasm. It catalyses the reaction Hydrolysis of proteins to small peptides in the presence of ATP and magnesium. alpha-casein is the usual test substrate. In the absence of ATP, only oligopeptides shorter than five residues are hydrolyzed (such as succinyl-Leu-Tyr-|-NHMec, and Leu-Tyr-Leu-|-Tyr-Trp, in which cleavage of the -Tyr-|-Leu- and -Tyr-|-Trp bonds also occurs).. Functionally, cleaves peptides in various proteins in a process that requires ATP hydrolysis. Has a chymotrypsin-like activity. Plays a major role in the degradation of misfolded proteins. The polypeptide is ATP-dependent Clp protease proteolytic subunit (Teredinibacter turnerae (strain ATCC 39867 / T7901)).